A 244-amino-acid polypeptide reads, in one-letter code: U4/U6.U5 tri-snRNP-associated protein 3-like protein C162.01c (244 aa).

Basic and acidic residues-rich tracts occupy residues 1–11 and 20–116; these read MSSSRSGEHRR and ESSR…RRDG. 2 disordered regions span residues 1–192 and 223–244; these read MSSS…EDEA and KKTK…LDNE. A phosphoserine mark is found at serine 121 and serine 140. Residues 126 to 182 show a composition bias toward basic and acidic residues; sequence GLERKREHEKLQAPSPKEEEERPVDQGDKMDGVKEDKDGSLEVGKSHDAMTRTKSAE. Residues 183-192 show a composition bias toward acidic residues; it reads EEIVEQEDEA.

Belongs to the SNUT3 family. In terms of assembly, part of a tri-snRNP complex.

The protein resides in the nucleus. May play a role in mRNA splicing. This chain is U4/U6.U5 tri-snRNP-associated protein 3-like protein C162.01c, found in Schizosaccharomyces pombe (strain 972 / ATCC 24843) (Fission yeast).